We begin with the raw amino-acid sequence, 286 residues long: tRNA (guanine-N(7)-)-methyltransferase (286 aa).

Glutamate 91, glutamate 116, asparagine 143, and aspartate 165 together coordinate S-adenosyl-L-methionine. Residue aspartate 165 is part of the active site. Substrate-binding positions include lysine 169, aspartate 201, and 262–265 (TNFE).

This sequence belongs to the class I-like SAM-binding methyltransferase superfamily. TrmB family.

The enzyme catalyses guanosine(46) in tRNA + S-adenosyl-L-methionine = N(7)-methylguanosine(46) in tRNA + S-adenosyl-L-homocysteine. It participates in tRNA modification; N(7)-methylguanine-tRNA biosynthesis. Functionally, catalyzes the formation of N(7)-methylguanine at position 46 (m7G46) in tRNA. The polypeptide is tRNA (guanine-N(7)-)-methyltransferase (Bifidobacterium longum subsp. infantis (strain ATCC 15697 / DSM 20088 / JCM 1222 / NCTC 11817 / S12)).